The sequence spans 232 residues: Ubiquinone biosynthesis O-methyltransferase (232 aa).

Residues R36, G55, D76, and M120 each contribute to the S-adenosyl-L-methionine site.

This sequence belongs to the methyltransferase superfamily. UbiG/COQ3 family.

It catalyses the reaction a 3-demethylubiquinol + S-adenosyl-L-methionine = a ubiquinol + S-adenosyl-L-homocysteine + H(+). It carries out the reaction a 3-(all-trans-polyprenyl)benzene-1,2-diol + S-adenosyl-L-methionine = a 2-methoxy-6-(all-trans-polyprenyl)phenol + S-adenosyl-L-homocysteine + H(+). It functions in the pathway cofactor biosynthesis; ubiquinone biosynthesis. Its function is as follows. O-methyltransferase that catalyzes the 2 O-methylation steps in the ubiquinone biosynthetic pathway. This is Ubiquinone biosynthesis O-methyltransferase from Burkholderia vietnamiensis (strain G4 / LMG 22486) (Burkholderia cepacia (strain R1808)).